Consider the following 251-residue polypeptide: Hydroxyacylglutathione hydrolase (251 aa).

7 residues coordinate Zn(2+): His53, His55, Asp57, His58, His110, Asp127, and His165.

It belongs to the metallo-beta-lactamase superfamily. Glyoxalase II family. In terms of assembly, monomer. Requires Zn(2+) as cofactor.

The catalysed reaction is an S-(2-hydroxyacyl)glutathione + H2O = a 2-hydroxy carboxylate + glutathione + H(+). Its pathway is secondary metabolite metabolism; methylglyoxal degradation; (R)-lactate from methylglyoxal: step 2/2. Its function is as follows. Thiolesterase that catalyzes the hydrolysis of S-D-lactoyl-glutathione to form glutathione and D-lactic acid. The sequence is that of Hydroxyacylglutathione hydrolase from Salmonella typhi.